The following is a 289-amino-acid chain: 4-hydroxy-tetrahydrodipicolinate synthase (289 aa).

Threonine 43 is a binding site for pyruvate. Tyrosine 131 acts as the Proton donor/acceptor in catalysis. Lysine 160 serves as the catalytic Schiff-base intermediate with substrate. Pyruvate is bound at residue valine 200.

The protein belongs to the DapA family. Homotetramer; dimer of dimers.

The protein resides in the cytoplasm. It catalyses the reaction L-aspartate 4-semialdehyde + pyruvate = (2S,4S)-4-hydroxy-2,3,4,5-tetrahydrodipicolinate + H2O + H(+). Its pathway is amino-acid biosynthesis; L-lysine biosynthesis via DAP pathway; (S)-tetrahydrodipicolinate from L-aspartate: step 3/4. Its function is as follows. Catalyzes the condensation of (S)-aspartate-beta-semialdehyde [(S)-ASA] and pyruvate to 4-hydroxy-tetrahydrodipicolinate (HTPA). This chain is 4-hydroxy-tetrahydrodipicolinate synthase, found in Methanococcus maripaludis (strain DSM 14266 / JCM 13030 / NBRC 101832 / S2 / LL).